The chain runs to 96 residues: Putative defensin-like protein 263 (96 aa).

An N-terminal signal peptide occupies residues 1–26 (MEKTSLKLVFLFSLTVIALCLSLSAA). Disulfide bonds link cysteine 48/cysteine 96, cysteine 67/cysteine 86, cysteine 73/cysteine 91, and cysteine 77/cysteine 93.

Belongs to the DEFL family.

It is found in the secreted. The sequence is that of Putative defensin-like protein 263 from Arabidopsis thaliana (Mouse-ear cress).